The following is an 85-amino-acid chain: Small ribosomal subunit protein bS16 (85 aa).

It belongs to the bacterial ribosomal protein bS16 family.

In Pseudomonas savastanoi pv. phaseolicola (strain 1448A / Race 6) (Pseudomonas syringae pv. phaseolicola (strain 1448A / Race 6)), this protein is Small ribosomal subunit protein bS16.